The primary structure comprises 224 residues: Large ribosomal subunit protein uL1 (224 aa).

The protein belongs to the universal ribosomal protein uL1 family. As to quaternary structure, part of the 50S ribosomal subunit.

In terms of biological role, binds directly to 23S rRNA. The L1 stalk is quite mobile in the ribosome, and is involved in E site tRNA release. Protein L1 is also a translational repressor protein, it controls the translation of the L11 operon by binding to its mRNA. The sequence is that of Large ribosomal subunit protein uL1 from Borrelia recurrentis (strain A1).